The chain runs to 894 residues: Peroxisomal hydratase-dehydrogenase-epimerase (894 aa).

Short-chain dehydrogenase like regions lie at residues 6-230 (RFDG…HKNN) and 311-523 (DFKG…CSDK). NADP(+) contacts are provided by V14, K53, N99, R132, Y164, K168, and A197. Y164 functions as the Proton acceptor in the catalytic mechanism. Catalysis depends on K168, which acts as the Lowers pKa of active site Tyr. Y458 (proton acceptor) is an active-site residue. (3R)-3-hydroxydecanoyl-CoA contacts are provided by H693, G694, and K723. Residues 763–782 (KKPADRGASTAANKPPARSP) form a disordered region. One can recognise a MaoC-like domain in the interval 776–887 (KPPARSPDAV…VKETGKLAIS (112 aa)). The (3R)-3-hydroxydecanoyl-CoA site is built by D803, N805, G826, F851, and G853.

It belongs to the short-chain dehydrogenases/reductases (SDR) family. In terms of assembly, monomer.

It is found in the peroxisome. The catalysed reaction is a (3R)-3-hydroxyacyl-CoA = a (2E)-enoyl-CoA + H2O. It carries out the reaction a (3R)-3-hydroxyacyl-CoA + NAD(+) = a 3-oxoacyl-CoA + NADH + H(+). It participates in lipid metabolism; fatty acid beta-oxidation. Functionally, second trifunctional enzyme acting on the beta-oxidation pathway for fatty acids, possessing hydratase-dehydrogenase-epimerase activities. Converts trans-2-enoyl-CoA via D-3-hydroxyacyl-CoA to 3-ketoacyl-CoA. This is Peroxisomal hydratase-dehydrogenase-epimerase (fox-2) from Neurospora crassa (strain ATCC 24698 / 74-OR23-1A / CBS 708.71 / DSM 1257 / FGSC 987).